Consider the following 182-residue polypeptide: Ribulose bisphosphate carboxylase small subunit, chloroplastic 3 (182 aa).

A chloroplast-targeting transit peptide spans 1–41 (MASIMMNKSVVLSKECAKPLASPKVTLNKRGFATTIATKNR).

Belongs to the RuBisCO small chain family. Heterohexadecamer of 8 large and 8 small subunits.

It localises to the plastid. Its subcellular location is the chloroplast. RuBisCO catalyzes two reactions: the carboxylation of D-ribulose 1,5-bisphosphate, the primary event in carbon dioxide fixation, as well as the oxidative fragmentation of the pentose substrate. Both reactions occur simultaneously and in competition at the same active site. Although the small subunit is not catalytic it is essential for maximal activity. This Acetabularia acetabulum (Mermaid's wine glass) protein is Ribulose bisphosphate carboxylase small subunit, chloroplastic 3.